Reading from the N-terminus, the 1168-residue chain is Probable pre-mRNA-splicing factor ATP-dependent RNA helicase DEAH5 (1168 aa).

Residues 76–206 are disordered; sequence IYPPKPKSEK…KDEYVEEDKG (131 aa). Composition is skewed to basic and acidic residues over residues 81–172 and 180–206; these read PKSE…DRRS and GRGD…EDKG. The 70-residue stretch at 214-283 folds into the S1 motif domain; it reads YQVYKGRVTR…SSDKYSLSMR (70 aa). Residues 289–326 are disordered; that stretch reads TGRDLIPLRKPSDEDDSSRSNPSYRTKDGQVTKTGISG. Residue serine 411 is modified to Phosphoserine. The Helicase ATP-binding domain occupies 525–688; the sequence is IQAVHDNQVL…FFNCNIFTIP (164 aa). ATP is bound at residue 538 to 545; that stretch reads GETGSGKT. The DEAH box motif lies at 635 to 638; the sequence is DEAH. Residues 706 to 886 enclose the Helicase C-terminal domain; it reads YLDAALITVL…MTTLTMKAMG (181 aa).

It belongs to the DEAD box helicase family. DEAH subfamily. PRP22 sub-subfamily.

It is found in the nucleus. It catalyses the reaction ATP + H2O = ADP + phosphate + H(+). Functionally, may be involved in pre-mRNA splicing. The chain is Probable pre-mRNA-splicing factor ATP-dependent RNA helicase DEAH5 from Arabidopsis thaliana (Mouse-ear cress).